The following is a 176-amino-acid chain: Phosphopantetheine adenylyltransferase (176 aa).

Thr11 contributes to the substrate binding site. Residues 11-12 and His19 each bind ATP; that span reads TF. Residues Lys43, Leu93, and Arg107 each contribute to the substrate site. Residues Glu117 and 141–147 each bind ATP; that span reads LSVVSSS.

Belongs to the bacterial CoaD family. As to quaternary structure, homohexamer. It depends on Mg(2+) as a cofactor.

It is found in the cytoplasm. It catalyses the reaction (R)-4'-phosphopantetheine + ATP + H(+) = 3'-dephospho-CoA + diphosphate. It functions in the pathway cofactor biosynthesis; coenzyme A biosynthesis; CoA from (R)-pantothenate: step 4/5. Its function is as follows. Reversibly transfers an adenylyl group from ATP to 4'-phosphopantetheine, yielding dephospho-CoA (dPCoA) and pyrophosphate. This is Phosphopantetheine adenylyltransferase from Tropheryma whipplei (strain TW08/27) (Whipple's bacillus).